The following is a 107-amino-acid chain: Putative regulatory protein BCG9842_A0044 (107 aa).

It belongs to the RemA family.

The protein is Putative regulatory protein BCG9842_A0044 of Bacillus cereus (strain G9842).